A 328-amino-acid polypeptide reads, in one-letter code: Malate dehydrogenase (328 aa).

12–18 (GAAGQIA) lines the NAD(+) pocket. Substrate contacts are provided by Arg-93 and Arg-99. Residues Asn-106, Gln-113, and 130 to 132 (VGN) each bind NAD(+). 2 residues coordinate substrate: Asn-132 and Arg-163. The active-site Proton acceptor is the His-188.

It belongs to the LDH/MDH superfamily. MDH type 2 family.

The enzyme catalyses (S)-malate + NAD(+) = oxaloacetate + NADH + H(+). In terms of biological role, catalyzes the reversible oxidation of malate to oxaloacetate. The chain is Malate dehydrogenase from Burkholderia cenocepacia (strain HI2424).